Here is a 209-residue protein sequence, read N- to C-terminus: Uracil phosphoribosyltransferase (209 aa).

Residues Arg79, Arg104, and 131–139 (DPMLATGNS) contribute to the 5-phospho-alpha-D-ribose 1-diphosphate site. Residues Ile194 and 199-201 (GDA) each bind uracil. Asp200 is a binding site for 5-phospho-alpha-D-ribose 1-diphosphate.

This sequence belongs to the UPRTase family. The cofactor is Mg(2+).

The enzyme catalyses UMP + diphosphate = 5-phospho-alpha-D-ribose 1-diphosphate + uracil. The protein operates within pyrimidine metabolism; UMP biosynthesis via salvage pathway; UMP from uracil: step 1/1. Allosterically activated by GTP. Catalyzes the conversion of uracil and 5-phospho-alpha-D-ribose 1-diphosphate (PRPP) to UMP and diphosphate. This is Uracil phosphoribosyltransferase from Agrobacterium fabrum (strain C58 / ATCC 33970) (Agrobacterium tumefaciens (strain C58)).